The following is a 201-amino-acid chain: Lipoprotein signal peptidase (201 aa).

2 helical membrane-spanning segments follow: residues 73–93 (SNAI…YLMI) and 97–117 (TIGS…NLID). Active-site residues include aspartate 126 and aspartate 144. A helical transmembrane segment spans residues 135-155 (YSFPVFNLADCFIIIGVIILI).

The protein belongs to the peptidase A8 family.

It is found in the cell inner membrane. It carries out the reaction Release of signal peptides from bacterial membrane prolipoproteins. Hydrolyzes -Xaa-Yaa-Zaa-|-(S,diacylglyceryl)Cys-, in which Xaa is hydrophobic (preferably Leu), and Yaa (Ala or Ser) and Zaa (Gly or Ala) have small, neutral side chains.. It participates in protein modification; lipoprotein biosynthesis (signal peptide cleavage). Functionally, this protein specifically catalyzes the removal of signal peptides from prolipoproteins. The sequence is that of Lipoprotein signal peptidase from Rickettsia conorii (strain ATCC VR-613 / Malish 7).